The primary structure comprises 168 residues: Ribosome maturation factor RimM (168 aa).

In terms of domain architecture, PRC barrel spans E96–F168.

This sequence belongs to the RimM family. As to quaternary structure, binds ribosomal protein uS19.

Its subcellular location is the cytoplasm. Functionally, an accessory protein needed during the final step in the assembly of 30S ribosomal subunit, possibly for assembly of the head region. Essential for efficient processing of 16S rRNA. May be needed both before and after RbfA during the maturation of 16S rRNA. It has affinity for free ribosomal 30S subunits but not for 70S ribosomes. The polypeptide is Ribosome maturation factor RimM (Coxiella burnetii (strain Dugway 5J108-111)).